The primary structure comprises 152 residues: Endoribonuclease YbeY (152 aa).

Zn(2+) is bound by residues H111, H115, and H121.

It belongs to the endoribonuclease YbeY family. It depends on Zn(2+) as a cofactor.

Its subcellular location is the cytoplasm. Single strand-specific metallo-endoribonuclease involved in late-stage 70S ribosome quality control and in maturation of the 3' terminus of the 16S rRNA. In Pseudomonas fluorescens (strain ATCC BAA-477 / NRRL B-23932 / Pf-5), this protein is Endoribonuclease YbeY.